The primary structure comprises 862 residues: Protein kintoun (862 aa).

Disordered regions lie at residues 208-229 (KLLPPLPNVPAPGKTGSERTTK), 564-602 (TKREEHGEPECDEKDGSEAEKARTLQKAKRNSRKKKKER), 626-670 (GEGA…STMP), and 743-854 (RREV…QFKS). The span at 564–586 (TKREEHGEPECDEKDGSEAEKAR) shows a compositional bias: basic and acidic residues. The span at 587 to 601 (TLQKAKRNSRKKKKE) shows a compositional bias: basic residues. Composition is skewed to basic and acidic residues over residues 748–757 (RRADARRMSE) and 766–785 (KDAHHHDDEHCSSSDQHDEK).

The protein belongs to the PIH1 family. Kintoun subfamily.

It localises to the cytoplasm. Required for cytoplasmic pre-assembly of axonemal dyneins, thereby playing a central role in motility in cilia and flagella. Involved in pre-assembly of dynein arm complexes in the cytoplasm before intraflagellar transport loads them for the ciliary compartment. This Anopheles gambiae (African malaria mosquito) protein is Protein kintoun.